A 152-amino-acid polypeptide reads, in one-letter code: uncharacterized protein (152 aa).

At 1–5 the chain is on the cytoplasmic side; it reads MWFPQ. Residues 6–26 form a helical membrane-spanning segment; it reads IIAGMAAGGAASAMTPGKVLF. Topologically, residues 27–38 are extracellular; that stretch reads TNALGLGCSRSR. The helical transmembrane segment at 39-59 threads the bilayer; the sequence is GLFLEMFGTAVLCLTVLMTAV. Topologically, residues 60–65 are cytoplasmic; it reads EKRETN. Residues 66-86 traverse the membrane as a helical segment; the sequence is FMAALPIGISLFMAHMALTGY. Topologically, residues 87–110 are extracellular; sequence TGTGVNPARSLGAAVAARYFPHYH. The short motif at 92–94 is the NPA element; sequence NPA. A helical membrane pass occupies residues 111–131; it reads WIYWISPLLGAFLAWSVWQLL. Residues 132 to 152 lie on the Cytoplasmic side of the membrane; sequence QILDYTTYVNAEKAAGQKKED.

It belongs to the MIP/aquaporin (TC 1.A.8) family.

The protein resides in the membrane. This is an uncharacterized protein from Saccharomyces cerevisiae (strain RM11-1a) (Baker's yeast).